Consider the following 153-residue polypeptide: Calmodulin-like protein 3 (153 aa).

EF-hand domains are found at residues 1–36 (MDQA…LGIY), 37–72 (IPDK…IMEE), 74–109 (DEEE…LGLK), and 112–147 (RTLE…GGFA). Ca(2+) contacts are provided by Asp-14, Asn-16, Asp-18, Lys-20, Glu-25, Asp-50, Asn-52, Asp-54, Tyr-56, Glu-61, Asp-87, Asn-89, Asp-91, Glu-98, Asp-125, Asp-127, Asp-129, Met-131, and Glu-136.

It belongs to the calmodulin family.

Its function is as follows. Potential calcium sensor. This chain is Calmodulin-like protein 3 (CML3), found in Arabidopsis thaliana (Mouse-ear cress).